Reading from the N-terminus, the 257-residue chain is Probable septum site-determining protein MinC (257 aa).

Residues 123 to 141 (AVEAAAAPAAEPTPEPGAA) show a composition bias toward low complexity. The disordered stretch occupies residues 123–144 (AVEAAAAPAAEPTPEPGAASQP).

The protein belongs to the MinC family. Interacts with MinD and FtsZ.

Its function is as follows. Cell division inhibitor that blocks the formation of polar Z ring septums. Rapidly oscillates between the poles of the cell to destabilize FtsZ filaments that have formed before they mature into polar Z rings. Prevents FtsZ polymerization. This chain is Probable septum site-determining protein MinC, found in Burkholderia multivorans (strain ATCC 17616 / 249).